Here is a 333-residue protein sequence, read N- to C-terminus: MRIWWLLLVMGACTRSVFSQDTCRQGHSGIPGNPGHNGLPGRDGRDGAKGDKGDAGEPGHPGGPGKDGIRGEKGEPGADGRVEAKGIKGDPGSRGSPGKHGPKGSIGPTGEQGLPGETGPQGQKGDKGEVGPTGPEGLMGSTGPLGPKGLPGPMGPIGKPGPRGEAGPMGPQGEPGVRGMRGWKGDRGEKGKVGEAPLVPKSAFTVGLTVISKFPPPDAPIKFDKILYNELNHYNVATGKFTCHVAGVYYFTYHITVFSRNVQVSLVKNGVKVLHTKDSYMSSEDQASGGIVQELKLGDEVWMQVTGGERFNGLFADEDDDTTFTGFLLFSSS.

The N-terminal stretch at 1 to 19 (MRIWWLLLVMGACTRSVFS) is a signal peptide. Positions 22–194 (TCRQGHSGIP…GDRGEKGKVG (173 aa)) are disordered. Collagen-like domains are found at residues 24-82 (RQGH…DGRV), 84-130 (AKGI…KGEV), and 134-193 (GPEG…KGKV). 4-hydroxyproline occurs at positions 31, 34, and 40. Basic and acidic residues predominate over residues 42-57 (RDGRDGAKGDKGDAGE). Residues Pro-58, Pro-61, and Pro-64 each carry the 4-hydroxyproline modification. Positions 67–88 (DGIRGEKGEPGADGRVEAKGIK) are enriched in basic and acidic residues. A 5-hydroxylysine modification is found at Lys-73. The O-linked (Gal...) hydroxylysine glycan is linked to Lys-73. Pro-76 and Pro-115 each carry 4-hydroxyproline. At Lys-127 the chain carries 5-hydroxylysine. Lys-127 is a glycosylation site (O-linked (Gal...) hydroxylysine). 4-hydroxyproline is present on residues Pro-151, Pro-160, and Pro-175. Residues 183–193 (WKGDRGEKGKV) show a composition bias toward basic and acidic residues. Residues 197–333 (PLVPKSAFTV…FTGFLLFSSS (137 aa)) enclose the C1q domain.

In terms of assembly, multimers (predominantly trimers). Interacts with ADIPOQ via the C1q domain to form a heterotrimeric complex. In terms of processing, the isomeric forms of the hydroxylated amino acids could not be determined in the mass-spectrometric methods reported in PubMed:18787108 but are assumed on the basis of their occurrence in collagen-like domains. In terms of tissue distribution, expressed predominantly in adipose tissue. Females express higher levels than males.

It is found in the secreted. In terms of biological role, probable adipokine. Activates AMPK, AKT, and p44/42 MAPK signaling pathways. In Mus musculus (Mouse), this protein is Complement C1q and tumor necrosis factor-related protein 9 (C1qtnf9).